Consider the following 238-residue polypeptide: 2-C-methyl-D-erythritol 4-phosphate cytidylyltransferase (238 aa).

This sequence belongs to the IspD/TarI cytidylyltransferase family. IspD subfamily.

It catalyses the reaction 2-C-methyl-D-erythritol 4-phosphate + CTP + H(+) = 4-CDP-2-C-methyl-D-erythritol + diphosphate. It functions in the pathway isoprenoid biosynthesis; isopentenyl diphosphate biosynthesis via DXP pathway; isopentenyl diphosphate from 1-deoxy-D-xylulose 5-phosphate: step 2/6. Functionally, catalyzes the formation of 4-diphosphocytidyl-2-C-methyl-D-erythritol from CTP and 2-C-methyl-D-erythritol 4-phosphate (MEP). The chain is 2-C-methyl-D-erythritol 4-phosphate cytidylyltransferase from Acinetobacter baumannii (strain ATCC 17978 / DSM 105126 / CIP 53.77 / LMG 1025 / NCDC KC755 / 5377).